The sequence spans 182 residues: Putative manganese efflux pump MntP 2 (182 aa).

The next 6 helical transmembrane spans lie at 2–22, 37–57, 63–83, 104–123, 127–149, and 162–182; these read IELT…SIAL, AGGF…YLGV, IGGI…LKMI, LLLL…LTLT, LPLW…GGVH, and AEYL…IEHS.

The protein belongs to the MntP (TC 9.B.29) family.

It is found in the cell inner membrane. In terms of biological role, probably functions as a manganese efflux pump. The polypeptide is Putative manganese efflux pump MntP 2 (Wolinella succinogenes (strain ATCC 29543 / DSM 1740 / CCUG 13145 / JCM 31913 / LMG 7466 / NCTC 11488 / FDC 602W) (Vibrio succinogenes)).